We begin with the raw amino-acid sequence, 49 residues long: Large ribosomal subunit protein bL33 (49 aa).

It belongs to the bacterial ribosomal protein bL33 family.

This is Large ribosomal subunit protein bL33 from Lacticaseibacillus casei (strain BL23) (Lactobacillus casei).